A 244-amino-acid polypeptide reads, in one-letter code: Uridylate kinase (244 aa).

ATP is bound at residue 19–22 (KVSG). Positions 27-32 (GERGFG) are involved in allosteric activation by GTP. Residue G61 participates in UMP binding. Residues G62 and R66 each coordinate ATP. UMP is bound by residues D80 and 141 to 148 (IGSPFFTT). The ATP site is built by T168, Q169, Y174, and D177.

Belongs to the UMP kinase family. Homohexamer.

Its subcellular location is the cytoplasm. It carries out the reaction UMP + ATP = UDP + ADP. It participates in pyrimidine metabolism; CTP biosynthesis via de novo pathway; UDP from UMP (UMPK route): step 1/1. Its activity is regulated as follows. Allosterically activated by GTP. Inhibited by UTP. Catalyzes the reversible phosphorylation of UMP to UDP. The sequence is that of Uridylate kinase from Anaplasma phagocytophilum (strain HZ).